The chain runs to 272 residues: Phosphonates import ATP-binding protein PhnC 1 (272 aa).

One can recognise an ABC transporter domain in the interval 2 to 246 (LRIQALTKTY…VLTSIYGEED (245 aa)). 35 to 42 (GPSGAGKS) is a binding site for ATP.

This sequence belongs to the ABC transporter superfamily. Phosphonates importer (TC 3.A.1.9.1) family. In terms of assembly, the complex is composed of two ATP-binding proteins (PhnC), two transmembrane proteins (PhnE) and a solute-binding protein (PhnD).

The protein resides in the cell inner membrane. It carries out the reaction phosphonate(out) + ATP + H2O = phosphonate(in) + ADP + phosphate + H(+). Part of the ABC transporter complex PhnCDE involved in phosphonates import. Responsible for energy coupling to the transport system. The protein is Phosphonates import ATP-binding protein PhnC 1 of Rhodopseudomonas palustris (strain BisB18).